The primary structure comprises 361 residues: Phospho-N-acetylmuramoyl-pentapeptide-transferase (361 aa).

10 consecutive transmembrane segments (helical) span residues 28 to 48 (LAII…IKFL), 74 to 94 (TMGG…LADL), 99 to 119 (TWIT…DDYA), 133 to 153 (SKLL…EYLD), 168 to 188 (LSLD…VGSS), 203 to 223 (VPIA…GNLI), 236 to 256 (TGEL…FLWF), 263 to 283 (VFMG…ISVI), 288 to 308 (IVLA…ILQV), and 338 to 358 (KVVI…LSSL).

The protein belongs to the glycosyltransferase 4 family. MraY subfamily. Mg(2+) serves as cofactor.

The protein localises to the cell inner membrane. It catalyses the reaction UDP-N-acetyl-alpha-D-muramoyl-L-alanyl-gamma-D-glutamyl-meso-2,6-diaminopimeloyl-D-alanyl-D-alanine + di-trans,octa-cis-undecaprenyl phosphate = di-trans,octa-cis-undecaprenyl diphospho-N-acetyl-alpha-D-muramoyl-L-alanyl-D-glutamyl-meso-2,6-diaminopimeloyl-D-alanyl-D-alanine + UMP. Its pathway is cell wall biogenesis; peptidoglycan biosynthesis. Functionally, catalyzes the initial step of the lipid cycle reactions in the biosynthesis of the cell wall peptidoglycan: transfers peptidoglycan precursor phospho-MurNAc-pentapeptide from UDP-MurNAc-pentapeptide onto the lipid carrier undecaprenyl phosphate, yielding undecaprenyl-pyrophosphoryl-MurNAc-pentapeptide, known as lipid I. The chain is Phospho-N-acetylmuramoyl-pentapeptide-transferase from Rickettsia massiliae (strain Mtu5).